The primary structure comprises 2359 residues: Pre-mRNA-processing-splicing factor 8B (2359 aa).

Residues 1–50 form a disordered region; the sequence is MWNIDGTSLAPPGTDGSRMQTPSHPADHPSYTAPSNRNTPTVPTPEDAEA. The segment covering 32 to 41 has biased composition (polar residues); it reads TAPSNRNTPT. Residues 2129–2260 enclose the MPN domain; the sequence is TYIMPKNILK…LTSYKLTQAG (132 aa).

The protein resides in the nucleus. Functions as a scaffold that mediates the ordered assembly of spliceosomal proteins and snRNAs. Required for the assembly of the U4/U6-U5 tri-snRNP complex. This is Pre-mRNA-processing-splicing factor 8B from Arabidopsis thaliana (Mouse-ear cress).